Consider the following 393-residue polypeptide: Digeranylgeranylglycerophospholipid reductase (393 aa).

Ala14, Asp33, Cys44, Ala45, Gly47, Arg100, Ala124, Asp280, Gly292, and Ile293 together coordinate FAD.

It belongs to the geranylgeranyl reductase family. DGGGPL reductase subfamily. The cofactor is FAD.

The enzyme catalyses a 2,3-bis-O-phytanyl-sn-glycerol 1-phospholipid + 8 A = a 2,3-bis-O-(geranylgeranyl)-sn-glycerol 1-phospholipid + 8 AH2. It catalyses the reaction 2,3-bis-O-(phytanyl)-sn-glycerol 1-phosphate + 8 A = 2,3-bis-O-(geranylgeranyl)-sn-glycerol 1-phosphate + 8 AH2. The catalysed reaction is CDP-2,3-bis-O-(geranylgeranyl)-sn-glycerol + 8 AH2 = CDP-2,3-bis-O-(phytanyl)-sn-glycerol + 8 A. It carries out the reaction archaetidylserine + 8 AH2 = 2,3-bis-O-phytanyl-sn-glycero-3-phospho-L-serine + 8 A. Its pathway is membrane lipid metabolism; glycerophospholipid metabolism. Functionally, is involved in the reduction of 2,3-digeranylgeranylglycerophospholipids (unsaturated archaeols) into 2,3-diphytanylglycerophospholipids (saturated archaeols) in the biosynthesis of archaeal membrane lipids. Catalyzes the formation of archaetidic acid (2,3-di-O-phytanyl-sn-glyceryl phosphate) from 2,3-di-O-geranylgeranylglyceryl phosphate (DGGGP) via the hydrogenation of each double bond of the isoprenoid chains. Is also probably able to reduce double bonds of geranyl groups in CDP-2,3-bis-O-(geranylgeranyl)-sn-glycerol and archaetidylserine, thus acting at various stages in the biosynthesis of archaeal membrane lipids. The protein is Digeranylgeranylglycerophospholipid reductase of Methanobrevibacter smithii (strain ATCC 35061 / DSM 861 / OCM 144 / PS).